A 374-amino-acid polypeptide reads, in one-letter code: Beta sliding clamp (374 aa).

The protein belongs to the beta sliding clamp family. In terms of assembly, forms a ring-shaped head-to-tail homodimer around DNA which binds and tethers DNA polymerases and other proteins to the DNA. The DNA replisome complex has a single clamp-loading complex (3 tau and 1 each of delta, delta', psi and chi subunits) which binds 3 Pol III cores (1 core on the leading strand and 2 on the lagging strand) each with a beta sliding clamp dimer. Additional proteins in the replisome are other copies of gamma, psi and chi, Ssb, DNA helicase and RNA primase.

The protein resides in the cytoplasm. In terms of biological role, confers DNA tethering and processivity to DNA polymerases and other proteins. Acts as a clamp, forming a ring around DNA (a reaction catalyzed by the clamp-loading complex) which diffuses in an ATP-independent manner freely and bidirectionally along dsDNA. Initially characterized for its ability to contact the catalytic subunit of DNA polymerase III (Pol III), a complex, multichain enzyme responsible for most of the replicative synthesis in bacteria; Pol III exhibits 3'-5' exonuclease proofreading activity. The beta chain is required for initiation of replication as well as for processivity of DNA replication. The protein is Beta sliding clamp (dnaN) of Helicobacter pylori (strain J99 / ATCC 700824) (Campylobacter pylori J99).